An 816-amino-acid chain; its full sequence is Auxin response factor 12 (816 aa).

Low complexity predominate over residues 1–10 (MSSSSAASIG). A disordered region spans residues 1 to 24 (MSSSSAASIGPPQPPPPPAPPEEE). Over residues 11 to 20 (PPQPPPPPAP) the composition is skewed to pro residues. The TF-B3 DNA-binding region spans 135-237 (FCKTLTASDT…QLLLGIRRAS (103 aa)). Residues 526–565 (NDQKQKIQPDQSYQVPTSAVLPSPTSLPSHLREKFGFSDP) are disordered. The PB1 domain occupies 717–801 (RTFVKVYKSG…WYIKILSPED (85 aa)).

This sequence belongs to the ARF family. In terms of assembly, homodimers and heterodimers.

The protein localises to the nucleus. Functionally, auxin response factors (ARFs) are transcriptional factors that bind specifically to the DNA sequence 5'-TGTCTC-3' found in the auxin-responsive promoter elements (AuxREs). The chain is Auxin response factor 12 (ARF12) from Oryza sativa subsp. indica (Rice).